A 168-amino-acid polypeptide reads, in one-letter code: Photosystem I assembly protein Ycf3 (168 aa).

3 TPR repeats span residues 35 to 68 (AFTYYRDGMSAQSEGNYAEALQNYYEAMRLEIDP), 72 to 105 (SYILYNIGLIHTSNGEHTKALEYYFRALERNPFL), and 120 to 153 (GEQAIRQGDSEIAEAWFDQAAEYWKQAIALTPGN).

Belongs to the Ycf3 family.

It is found in the plastid. The protein localises to the chloroplast thylakoid membrane. Functionally, essential for the assembly of the photosystem I (PSI) complex. May act as a chaperone-like factor to guide the assembly of the PSI subunits. The polypeptide is Photosystem I assembly protein Ycf3 (Lactuca sativa (Garden lettuce)).